Reading from the N-terminus, the 62-residue chain is Lepidopteran-selective toxin (62 aa).

The N-terminal stretch at 1 to 24 (MKFLYGVILIALFLTVMTATLSEA) is a signal peptide. 4 disulfide bridges follow: Cys26–Cys43, Cys29–Cys51, Cys40–Cys56, and Cys44–Cys58. Tyr62 is a propeptide.

The protein belongs to the short scorpion toxin superfamily. Chloride channel inhibitor family. In terms of tissue distribution, expressed by the venom gland.

The protein resides in the secreted. Functionally, toxin with unknown function in healthy organisms. On glioma cells, interacts with chloride channels (probably ClC-3/CLCN3) and MMP2 at the surface of glioma cells. This complex is then internalized via caveolae, thus inhibiting the chloride channels necessary for cell shrinkage and tumor propagation. Induces flaccid paralysis in H.virescens larvae. Is not toxic to S.falculata larvae or mice. The sequence is that of Lepidopteran-selective toxin from Hottentotta tamulus (Eastern Indian scorpion).